Reading from the N-terminus, the 315-residue chain is Ribosomal RNA small subunit methyltransferase H (315 aa).

Residues 37 to 39, Asp57, Phe83, Asp105, and Gln112 each bind S-adenosyl-L-methionine; that span reads GGH.

Belongs to the methyltransferase superfamily. RsmH family.

It is found in the cytoplasm. The enzyme catalyses cytidine(1402) in 16S rRNA + S-adenosyl-L-methionine = N(4)-methylcytidine(1402) in 16S rRNA + S-adenosyl-L-homocysteine + H(+). Functionally, specifically methylates the N4 position of cytidine in position 1402 (C1402) of 16S rRNA. This is Ribosomal RNA small subunit methyltransferase H from Pseudomonas putida (strain ATCC 700007 / DSM 6899 / JCM 31910 / BCRC 17059 / LMG 24140 / F1).